We begin with the raw amino-acid sequence, 229 residues long: Enolase-phosphatase E1 (229 aa).

Residues 208–218 are compositionally biased toward polar residues; the sequence is DTQSTHRQVSS. Residues 208–229 are disordered; sequence DTQSTHRQVSSFDDIHPEQIPT. Residues 220-229 are compositionally biased toward basic and acidic residues; the sequence is DDIHPEQIPT.

This sequence belongs to the HAD-like hydrolase superfamily. MasA/MtnC family. As to quaternary structure, monomer. It depends on Mg(2+) as a cofactor.

The catalysed reaction is 5-methylsulfanyl-2,3-dioxopentyl phosphate + H2O = 1,2-dihydroxy-5-(methylsulfanyl)pent-1-en-3-one + phosphate. The protein operates within amino-acid biosynthesis; L-methionine biosynthesis via salvage pathway; L-methionine from S-methyl-5-thio-alpha-D-ribose 1-phosphate: step 3/6. Its pathway is amino-acid biosynthesis; L-methionine biosynthesis via salvage pathway; L-methionine from S-methyl-5-thio-alpha-D-ribose 1-phosphate: step 4/6. In terms of biological role, bifunctional enzyme that catalyzes the enolization of 2,3-diketo-5-methylthiopentyl-1-phosphate (DK-MTP-1-P) into the intermediate 2-hydroxy-3-keto-5-methylthiopentenyl-1-phosphate (HK-MTPenyl-1-P), which is then dephosphorylated to form the acireductone 1,2-dihydroxy-3-keto-5-methylthiopentene (DHK-MTPene). This chain is Enolase-phosphatase E1, found in Cronobacter sakazakii (Enterobacter sakazakii).